A 1129-amino-acid chain; its full sequence is Tyrosine-protein kinase JAK2 (1129 aa).

One can recognise an FERM domain in the interval 35–378; that stretch reads PLLQVYLYYS…GYYRLTADAH (344 aa). Y117 carries the phosphotyrosine; by autocatalysis modification. In terms of domain architecture, SH2; atypical spans 399–480; that stretch reads HGPIFMDFAI…NLKDLLTCYQ (82 aa). Protein kinase domains are found at residues 542–806 and 846–1118; these read LIFE…NSLF and LKFL…DLAQ. 852–860 is an ATP binding site; it reads LGKGNFGSV. Y865 carries the phosphotyrosine; by autocatalysis modification. Position 879 (K879) interacts with ATP. 2 positions are modified to phosphotyrosine; by autocatalysis: Y963 and Y969. Residue D973 is the Proton acceptor of the active site. Y1004 and Y1005 each carry phosphotyrosine; by autocatalysis.

The protein belongs to the protein kinase superfamily. Tyr protein kinase family. JAK subfamily. In terms of processing, autophosphorylated, leading to regulate its activity.

It localises to the endomembrane system. The protein localises to the nucleus. The enzyme catalyses L-tyrosyl-[protein] + ATP = O-phospho-L-tyrosyl-[protein] + ADP + H(+). Its activity is regulated as follows. Regulated by autophosphorylation, can both activate or decrease activity. Heme regulates its activity by enhancing the phosphorylation on Tyr-1004 and Tyr-1005. In terms of biological role, non-receptor tyrosine kinase involved in various processes such as cell growth, development, differentiation or histone modifications. Mediates essential signaling events in both innate and adaptive immunity. In the cytoplasm, plays a pivotal role in signal transduction via its association with cytokine receptors. Following ligand-binding to cell surface receptors, phosphorylates specific tyrosine residues on the cytoplasmic tails of the receptor, creating docking sites for STATs proteins. Subsequently, phosphorylates the STATs proteins once they are recruited to the receptor. Phosphorylated STATs then form homodimer or heterodimers and translocate to the nucleus to activate gene transcription. For example, cell stimulation with erythropoietin (EPO) during erythropoiesis leads to JAK2 autophosphorylation, activation, and its association with erythropoietin receptor (EPOR) that becomes phosphorylated in its cytoplasmic domain. Then, STAT5 (STAT5A or STAT5B) is recruited, phosphorylated and activated by JAK2. Once activated, dimerized STAT5 translocates into the nucleus and promotes the transcription of several essential genes involved in the modulation of erythropoiesis. Part of a signaling cascade that is activated by increased cellular retinol and that leads to the activation of STAT5 (STAT5A or STAT5B). In the nucleus, plays a key role in chromatin by specifically mediating phosphorylation of 'Tyr-41' of histone H3 (H3Y41ph), a specific tag that promotes exclusion of CBX5 (HP1 alpha) from chromatin. Up-regulates the potassium voltage-gated channel activity of KCNA3. The polypeptide is Tyrosine-protein kinase JAK2 (Gallus gallus (Chicken)).